The following is a 681-amino-acid chain: DNA ligase (681 aa).

Residues 45-49, 94-95, and Glu-120 contribute to the NAD(+) site; these read DFDFD and SL. The active-site N6-AMP-lysine intermediate is Lys-122. Arg-143, Glu-177, Lys-289, and Lys-313 together coordinate NAD(+). Positions 403, 406, 421, and 426 each coordinate Zn(2+). One can recognise a BRCT domain in the interval 593–681; the sequence is ADQQPFAGQS…SLKIDFKNLI (89 aa).

Belongs to the NAD-dependent DNA ligase family. LigA subfamily. The cofactor is Mg(2+). Mn(2+) is required as a cofactor.

It catalyses the reaction NAD(+) + (deoxyribonucleotide)n-3'-hydroxyl + 5'-phospho-(deoxyribonucleotide)m = (deoxyribonucleotide)n+m + AMP + beta-nicotinamide D-nucleotide.. Functionally, DNA ligase that catalyzes the formation of phosphodiester linkages between 5'-phosphoryl and 3'-hydroxyl groups in double-stranded DNA using NAD as a coenzyme and as the energy source for the reaction. It is essential for DNA replication and repair of damaged DNA. The sequence is that of DNA ligase from Leptospira interrogans serogroup Icterohaemorrhagiae serovar copenhageni (strain Fiocruz L1-130).